A 472-amino-acid polypeptide reads, in one-letter code: Nuclear hormone receptor family member nhr-2 (472 aa).

4 stretches are compositionally biased toward polar residues: residues 57–83 (TATN…LSQI), 90–112 (NDTI…HNQP), 138–147 (LSSTQSSPDN), and 159–171 (VRRN…SAST). 2 disordered regions span residues 57–112 (TATN…HNQP) and 138–184 (LSST…RTNT). Residues 215 to 297 (KDRCMVCGDN…VGMNRDNVRV (83 aa)) constitute a DNA-binding region (nuclear receptor). NR C4-type zinc fingers lie at residues 218–238 (CMVC…CEGC) and 267–285 (CAAN…FAKC).

Belongs to the nuclear hormone receptor family.

The protein resides in the nucleus. In terms of biological role, orphan nuclear receptor. This is Nuclear hormone receptor family member nhr-2 (nhr-2) from Caenorhabditis elegans.